Here is a 380-residue protein sequence, read N- to C-terminus: High affinity transport system protein p37 (380 aa).

Positions 1–26 (MLKRKKLLQGFLKFLPLIIPATIFVS) are cleaved as a signal peptide. A lipid anchor (N-palmitoyl cysteine) is attached at Cys-27. Cys-27 carries the S-diacylglycerol cysteine lipid modification. Residues 285–304 (NHFYTPTENNGKGDSEKSNN) form a disordered region.

It is found in the cell membrane. In terms of biological role, P37 is part of a high-affinity transport system. This is High affinity transport system protein p37 (p37) from Mycoplasma pneumoniae (strain ATCC 29342 / M129 / Subtype 1) (Mycoplasmoides pneumoniae).